We begin with the raw amino-acid sequence, 586 residues long: Urease subunit alpha (586 aa).

Residues 134–586 enclose the Urease domain; it reads GAIDTHIHFI…LPMAQRYFLF (453 aa). 3 residues coordinate Ni(2+): His-139, His-141, and Lys-222. Position 222 is an N6-carboxylysine (Lys-222). His-224 serves as a coordination point for substrate. The Ni(2+) site is built by His-251 and His-277. His-325 (proton donor) is an active-site residue. A Ni(2+)-binding site is contributed by Asp-365.

This sequence belongs to the metallo-dependent hydrolases superfamily. Urease alpha subunit family. As to quaternary structure, heterotrimer of UreA (gamma), UreB (beta) and UreC (alpha) subunits. Three heterotrimers associate to form the active enzyme. It depends on Ni cation as a cofactor. Carboxylation allows a single lysine to coordinate two nickel ions.

Its subcellular location is the cytoplasm. The enzyme catalyses urea + 2 H2O + H(+) = hydrogencarbonate + 2 NH4(+). It participates in nitrogen metabolism; urea degradation; CO(2) and NH(3) from urea (urease route): step 1/1. The polypeptide is Urease subunit alpha (Gloeothece citriformis (strain PCC 7424) (Cyanothece sp. (strain PCC 7424))).